The sequence spans 91 residues: Non-specific lipid-transfer protein 1 (91 aa).

4 cysteine pairs are disulfide-bonded: C3–C50, C13–C27, C28–C73, and C48–C87.

This sequence belongs to the plant LTP family.

Its function is as follows. Plant non-specific lipid-transfer proteins transfer phospholipids as well as galactolipids across membranes. May play a role in wax or cutin deposition in the cell walls of expanding epidermal cells and certain secretory tissues. This is Non-specific lipid-transfer protein 1 from Prunus persica (Peach).